The primary structure comprises 333 residues: uncharacterized protein (333 aa).

It to bacterial alkanal monooxygenase alpha and beta chains.

This is an uncharacterized protein from Bacillus subtilis (strain 168).